Reading from the N-terminus, the 254-residue chain is TLC domain-containing protein At5g14285 (254 aa).

Transmembrane regions (helical) follow at residues 12-32 (DLPI…FIVF), 45-65 (SCLI…RAVF), 82-101 (TVLD…YIVF), 124-144 (FLVF…EVTS), 172-192 (LSPP…PLFF), and 211-231 (WLWI…ILWI). The 211-residue stretch at 38–248 (QIRPEASSCL…FSERKANKIR (211 aa)) folds into the TLC domain.

Its subcellular location is the membrane. This chain is TLC domain-containing protein At5g14285, found in Arabidopsis thaliana (Mouse-ear cress).